Reading from the N-terminus, the 1005-residue chain is Regulator of telomere elongation helicase 1 homolog (1005 aa).

In terms of domain architecture, Helicase ATP-binding spans 7–322 (AGIPVHFPFE…KEMLLELEKA (316 aa)). An ATP-binding site is contributed by 42–49 (SPTGTGKT). [4Fe-4S] cluster contacts are provided by Cys145, Cys163, Cys172, and Cys208. The short motif at 251–254 (DEAH) is the DEAH box element. A Phosphothreonine modification is found at Thr876. The interval 893–917 (NGPLKTEPSEPATTSSSFCPTPAQS) is disordered.

Belongs to the helicase family. RAD3/XPD subfamily.

Its subcellular location is the nucleus. It carries out the reaction ATP + H2O = ADP + phosphate + H(+). Functionally, a probable ATP-dependent DNA helicase implicated in DNA repair and the maintenance of genomic stability. Acts as an anti-recombinase to counteract toxic recombination and limit crossover during meiosis. Regulates meiotic recombination and crossover homeostasis by physically dissociating strand invasion events and thereby promotes noncrossover repair by meiotic synthesis dependent strand annealing (SDSA) as well as disassembly of D loop recombination intermediates. This is Regulator of telomere elongation helicase 1 homolog from Drosophila virilis (Fruit fly).